We begin with the raw amino-acid sequence, 153 residues long: ORM1-like protein 3 (153 aa).

The tract at residues 1–17 (MNVGTAHSEVNPNTRVM) is important for ceramide level-sensing. Over 1 to 21 (MNVGTAHSEVNPNTRVMNSRG) the chain is Cytoplasmic. 2 helical membrane passes run 22–44 (IWLSYVLAIGLLHIVLLSIPFVS) and 45–63 (VPVVWTLTNLIHNMGMYIF). Over 64–100 (LHTVKGTPFETPDQGKARLLTHWEQMDYGVQFTASRK) the chain is Cytoplasmic. The chain crosses the membrane as a helical span at residues 101–117 (FLTITPIVLYFLTSFYT). At 118–121 (KYDQ) the chain is on the lumenal side. A helical membrane pass occupies residues 122–139 (IHFVLNTVSLMSVLIPKL). The residue at position 137 (proline 137) is a Hydroxyproline. The Cytoplasmic segment spans residues 140 to 153 (PQLHGVRIFGINKY).

Belongs to the ORM family. Ceramide-sensitive subunit of the serine palmitoyltransferase (SPT) complex, which is also composed of SPTLC1, SPTLC2/3 and SPTSSA/B. Post-translationally, when hydroxylated at Pro-137, ubiquitinated via 'Lys-48'-linkage, leading to proteasomal degradation. In endothelial cells, ORMDL3 proteasomal degradation is controlled by the sphingosine 1-phosphate receptor signaling pathway. As to expression, widely expressed. Expressed in adult and fetal heart, brain, lung, liver, skeletal muscle and kidney. Expressed in adult pancreas and placenta and in fetal spleen and thymus.

The protein resides in the endoplasmic reticulum membrane. Plays an essential role in the homeostatic regulation of sphingolipid de novo biosynthesis by modulating the activity of the serine palmitoyltransferase (SPT) in response to ceramide levels. When complexed to SPT, the binding of ceramides to its N-terminus stabilizes a conformation that block SPT substrate entry, hence preventing SPT catalytic activity. Through this mechanism, maintains ceramide levels at sufficient concentrations for the production of complex sphingolipids, but which prevents the accumulation of ceramides to levels that trigger apoptosis. This is ORM1-like protein 3 (ORMDL3) from Homo sapiens (Human).